The sequence spans 66 residues: Protein KleD (66 aa).

Residues 33–52 (VAVRSGNEWQQVTKWVEPAR) constitute a DNA-binding region (H-T-H motif).

In Escherichia coli, this protein is Protein KleD (kleD).